Here is a 410-residue protein sequence, read N- to C-terminus: MKIMSVNSGSSSLKFQLLEMPQQEVIVSGLVERIGSNQAVFTMKTKDKKDKQVLEVLNHQTAVELLLDALIQKKVINTLEEIEGVGHRVVQGGEIFSDSAVLTEKTLAQIESLCDLAPLHNPANIISIKAFQKVLPQVFQVAVFDTTFHQSMPAVNFLYATPYYWYQKYQIRKYGAHGTSYKYITEQMQQILGKKNAKIIICHAGNGVSLCAVDSGKSVDTSMGFTPLEGVPMGTRSGNIDPAVVKFIAEKENKTVACVIDDLNKKSGYLGVSGISNDTRDILASIKEGNQQAILSHDIQVKRIVDYIASYYVLLKGVDALVFTAGIGENSSFFRSEIIKRLSVLGIKLDEEKNKVQGKQELITTFDSAIKAFVVPTNEELAIAQDVLRLQQNQTNQDKDDQQECFCCCG.

Residue Asn-7 coordinates Mg(2+). Lys-14 provides a ligand contact to ATP. Residue Arg-88 participates in substrate binding. The active-site Proton donor/acceptor is the Asp-145. Residues 203 to 207, 278 to 280, and 326 to 330 each bind ATP; these read HAGNG, DTR, and GIGEN. Glu-379 contributes to the Mg(2+) binding site.

The protein belongs to the acetokinase family. As to quaternary structure, homodimer. It depends on Mg(2+) as a cofactor. Mn(2+) serves as cofactor.

Its subcellular location is the cytoplasm. It catalyses the reaction acetate + ATP = acetyl phosphate + ADP. It functions in the pathway metabolic intermediate biosynthesis; acetyl-CoA biosynthesis; acetyl-CoA from acetate: step 1/2. Its function is as follows. Catalyzes the formation of acetyl phosphate from acetate and ATP. Can also catalyze the reverse reaction. This Chlorante-Aster yellows phytoplasma protein is Acetate kinase.